Here is a 251-residue protein sequence, read N- to C-terminus: Ribonuclease HII (251 aa).

In terms of domain architecture, RNase H type-2 spans Gly32–Leu223. A divalent metal cation contacts are provided by Asp38, Glu39, and Asp132.

The protein belongs to the RNase HII family. Mn(2+) serves as cofactor. Mg(2+) is required as a cofactor.

It localises to the cytoplasm. The catalysed reaction is Endonucleolytic cleavage to 5'-phosphomonoester.. Its function is as follows. Endonuclease that specifically degrades the RNA of RNA-DNA hybrids. The sequence is that of Ribonuclease HII from Nocardia farcinica (strain IFM 10152).